Consider the following 1429-residue polypeptide: Inactive rhomboid protein 1 (1429 aa).

3 disordered regions span residues methionine 1–arginine 36, glycine 560–proline 579, and threonine 740–alanine 766. At methionine 1–threonine 843 the chain is on the cytoplasmic side. A compositionally biased stretch (low complexity) spans serine 22 to serine 33. Polar residues-rich tracts occupy residues alanine 564 to asparagine 573 and threonine 740 to glutamine 763. Residues valine 844–glycine 864 traverse the membrane as a helical segment. Residues serine 865 to serine 1099 are Lumenal-facing. The helical transmembrane segment at leucine 1100 to leucine 1120 threads the bilayer. Residues alanine 1121–arginine 1131 are Cytoplasmic-facing. A helical membrane pass occupies residues threonine 1132–proline 1152. Topologically, residues histidine 1153–glutamate 1156 are lumenal. The helical transmembrane segment at valine 1157 to methionine 1177 threads the bilayer. Over histidine 1178–histidine 1186 the chain is Cytoplasmic. A helical transmembrane segment spans residues isoleucine 1187–tyrosine 1207. Residues glutamine 1208–asparagine 1210 lie on the Lumenal side of the membrane. The chain crosses the membrane as a helical span at residues phenylalanine 1211–phenylalanine 1231. At threonine 1232 to leucine 1245 the chain is on the cytoplasmic side. Residues isoleucine 1246–isoleucine 1266 form a helical membrane-spanning segment. Topologically, residues histidine 1267–leucine 1429 are lumenal.

It belongs to the peptidase S54 family. In terms of tissue distribution, specifically expressed in the nervous system and in brain.

The protein resides in the endoplasmic reticulum membrane. Rhomboid protease-like protein which has no protease activity but regulates the secretion of several ligands of the epidermal growth factor receptor. Indirectly activates the epidermal growth factor receptor signaling pathway and may thereby regulate sleep, cell survival, proliferation and migration. The chain is Inactive rhomboid protein 1 (rho-5) from Drosophila melanogaster (Fruit fly).